We begin with the raw amino-acid sequence, 154 residues long: Small ribosomal subunit protein uS11c (154 aa).

It belongs to the universal ribosomal protein uS11 family. Part of the 30S ribosomal subunit.

It is found in the plastid. The sequence is that of Small ribosomal subunit protein uS11c from Helicosporidium sp. subsp. Simulium jonesii (Green alga).